The primary structure comprises 253 residues: Ubiquinone/menaquinone biosynthesis C-methyltransferase UbiE (253 aa).

S-adenosyl-L-methionine contacts are provided by residues Thr76, Asp97, 125–126, and Ser142; that span reads NA.

It belongs to the class I-like SAM-binding methyltransferase superfamily. MenG/UbiE family.

The enzyme catalyses a 2-demethylmenaquinol + S-adenosyl-L-methionine = a menaquinol + S-adenosyl-L-homocysteine + H(+). It carries out the reaction a 2-methoxy-6-(all-trans-polyprenyl)benzene-1,4-diol + S-adenosyl-L-methionine = a 5-methoxy-2-methyl-3-(all-trans-polyprenyl)benzene-1,4-diol + S-adenosyl-L-homocysteine + H(+). The protein operates within quinol/quinone metabolism; menaquinone biosynthesis; menaquinol from 1,4-dihydroxy-2-naphthoate: step 2/2. It participates in cofactor biosynthesis; ubiquinone biosynthesis. Methyltransferase required for the conversion of demethylmenaquinol (DMKH2) to menaquinol (MKH2) and the conversion of 2-polyprenyl-6-methoxy-1,4-benzoquinol (DDMQH2) to 2-polyprenyl-3-methyl-6-methoxy-1,4-benzoquinol (DMQH2). The sequence is that of Ubiquinone/menaquinone biosynthesis C-methyltransferase UbiE from Xylella fastidiosa (strain 9a5c).